The sequence spans 396 residues: S-adenosylmethionine synthase (396 aa).

His15 is a binding site for ATP. Asp17 provides a ligand contact to Mg(2+). Glu43 contributes to the K(+) binding site. Positions 56 and 99 each coordinate L-methionine. The interval 99 to 109 is flexible loop; the sequence is QSGDIAQGVDT. ATP-binding positions include 173 to 175, 241 to 242, Asp250, 256 to 257, Ala273, and Lys277; these read DGK, RF, and RK. An L-methionine-binding site is contributed by Asp250. Residue Lys281 participates in L-methionine binding.

The protein belongs to the AdoMet synthase family. In terms of assembly, homotetramer; dimer of dimers. The cofactor is Mg(2+). Requires K(+) as cofactor.

It localises to the cytoplasm. The catalysed reaction is L-methionine + ATP + H2O = S-adenosyl-L-methionine + phosphate + diphosphate. Its pathway is amino-acid biosynthesis; S-adenosyl-L-methionine biosynthesis; S-adenosyl-L-methionine from L-methionine: step 1/1. Functionally, catalyzes the formation of S-adenosylmethionine (AdoMet) from methionine and ATP. The overall synthetic reaction is composed of two sequential steps, AdoMet formation and the subsequent tripolyphosphate hydrolysis which occurs prior to release of AdoMet from the enzyme. This chain is S-adenosylmethionine synthase, found in Nocardioides sp. (strain ATCC BAA-499 / JS614).